The sequence spans 821 residues: Cation/H(+) antiporter 15 (821 aa).

Transmembrane regions (helical) follow at residues 37–57, 65–82, 97–117, 131–151, 166–186, 200–220, 228–248, 268–288, 292–312, 318–338, 350–370, 378–398, and 410–430; these read LPLFVLQLTLVVVVTRFFVFI, RVISEILGGIVLGPSVLG, VMVLETMANVGLLYFLFLVGV, ALTIAIGGMVLPFLIGAAFSF, ILFLGVALSVTAFPVLARILA, MSAALVNDMFAWILLALAIAL, FASLWVMISSAVFIAVCVFVV, FHICLILTGVMISGFITDAIG, VFGAFVFGLVIPNGPLGLTLI, FVSGLLLPLFFAISGLKTNIA, FLVIFLACAGKVIGTVIVAFF, GITLGLLLNTKGLVEMIVLNV, and FATMVLVALVMTGVITPIVTI. Residues 800-821 form a disordered region; it reads DFPESPVHSHETKVTYGLENPR.

Belongs to the monovalent cation:proton antiporter 2 (CPA2) transporter (TC 2.A.37) family. CHX (TC 2.A.37.4) subfamily. As to expression, specifically expressed in pollen.

Its subcellular location is the membrane. Its function is as follows. May operate as a cation/H(+) antiporter. This is Cation/H(+) antiporter 15 (CHX15) from Arabidopsis thaliana (Mouse-ear cress).